The chain runs to 460 residues: 3-isopropylmalate dehydratase large subunit (460 aa).

[4Fe-4S] cluster-binding residues include Cys338, Cys398, and Cys401.

The protein belongs to the aconitase/IPM isomerase family. LeuC type 1 subfamily. Heterodimer of LeuC and LeuD. [4Fe-4S] cluster is required as a cofactor.

The enzyme catalyses (2R,3S)-3-isopropylmalate = (2S)-2-isopropylmalate. It functions in the pathway amino-acid biosynthesis; L-leucine biosynthesis; L-leucine from 3-methyl-2-oxobutanoate: step 2/4. Its function is as follows. Catalyzes the isomerization between 2-isopropylmalate and 3-isopropylmalate, via the formation of 2-isopropylmaleate. This chain is 3-isopropylmalate dehydratase large subunit, found in Streptococcus gordonii (strain Challis / ATCC 35105 / BCRC 15272 / CH1 / DL1 / V288).